Consider the following 676-residue polypeptide: Protein TAPT1 homolog (676 aa).

The disordered stretch occupies residues 1 to 44 (MNATLNSAGGKRQLRFRGDVTGSRVEELHHQQQEEQKQKAPLAQ). Basic and acidic residues predominate over residues 24–38 (RVEELHHQQQEEQKQ). 6 consecutive transmembrane segments (helical) span residues 128–148 (SFLY…WALV), 170–190 (EICD…MLLV), 249–269 (VLTH…LIMF), 346–366 (FCVM…IDWV), 414–434 (GFIP…AVSF), and 437–457 (LAAW…RICL). The tract at residues 625–676 (SGDGVTSAKAKKATQRLPKRTHKRSESEPGMPSMVEKGGAAGIAGGNQTTQL) is disordered. Basic residues predominate over residues 633 to 647 (KAKKATQRLPKRTHK).

Belongs to the TAPT1 family.

It localises to the membrane. The chain is Protein TAPT1 homolog from Drosophila melanogaster (Fruit fly).